A 290-amino-acid polypeptide reads, in one-letter code: Syntaxin-1A (290 aa).

Positions 1–21 (MTKDRLAALQAAQSDDEDMPE) are disordered. The Cytoplasmic portion of the chain corresponds to 1 to 267 (MTKDRLAALQ…KYQSKARRKK (267 aa)). One can recognise a t-SNARE coiled-coil homology domain in the interval 194–256 (LADIEARHAD…QTATQDTKKA (63 aa)). The helical; Anchor for type IV membrane protein transmembrane segment at 268 to 289 (IWIAICVLIAIIILVVFLAIYL) threads the bilayer. Residue Thr290 is a topological domain, vesicular.

It belongs to the syntaxin family. In terms of processing, (Microbial infection) Targeted and hydrolyzed by the light chain (LC) of P.bifermentans PMP1. Cleavage probably inhibits neurotransmitter release.

It localises to the cytoplasmic vesicle. Its subcellular location is the secretory vesicle. The protein resides in the synaptic vesicle membrane. Functionally, plays a critical role in several secretory processes. The sequence is that of Syntaxin-1A from Anopheles gambiae (African malaria mosquito).